A 128-amino-acid polypeptide reads, in one-letter code: Holo-[acyl-carrier-protein] synthase (128 aa).

Mg(2+) is bound by residues Asp8 and Glu58.

The protein belongs to the P-Pant transferase superfamily. AcpS family. It depends on Mg(2+) as a cofactor.

Its subcellular location is the cytoplasm. The enzyme catalyses apo-[ACP] + CoA = holo-[ACP] + adenosine 3',5'-bisphosphate + H(+). In terms of biological role, transfers the 4'-phosphopantetheine moiety from coenzyme A to a Ser of acyl-carrier-protein. This Alkalilimnicola ehrlichii (strain ATCC BAA-1101 / DSM 17681 / MLHE-1) protein is Holo-[acyl-carrier-protein] synthase.